The sequence spans 468 residues: MLSLPGLNLAPQPAEPLNAPTSTVTRTQDLAANTEYRFEVSFARTLTIKLQSGTAEFFGTELAPSTTYSFQGTKGAVFTWHGCKLEIGGEVESDYVAEETPMMSCANLHFALELLRDQSVSSGSAEMGPRVLVVGPEHSGKTSLVKVMTSYAAKTSRQPMVVNLDPRQGMLSIPGSFSAAAYSSIVDIEEGWGSSPISGPSPIPVKMPLVYHYGLKDPEEGKVFKPLVTRMALAVTSRLEEDKLSKQAGFIIDSSGAISQGRNGVYENIEHIVSEFSVNVLITLGSERLYSDLSRKYRNRDPSESVNVIRLDKSGGCVNRPEEYMKALRHAQVREYFFGHGDNTLAPSSQTCDFGDLHIFQIVEGDEGALYRSGDYDEYDPSNVSLASIYTRVTPSPSLQNSLLAITTASPTDSQDVIRDSSVKGYIYVADVDEAKKKVRLLSPQPGMIPGNAMVLGTWPEDVPGLVG.

The segment at 1 to 22 (MLSLPGLNLAPQPAEPLNAPTS) is disordered. Residues glutamate 35, lysine 74, and 138 to 143 (HSGKTS) contribute to the ATP site.

The protein belongs to the Clp1 family. Clp1 subfamily. In terms of assembly, component of a pre-mRNA cleavage factor complex. Interacts directly with PCF11.

The protein resides in the nucleus. Functionally, required for endonucleolytic cleavage during polyadenylation-dependent pre-mRNA 3'-end formation. The protein is mRNA cleavage and polyadenylation factor CLP1 of Phaeosphaeria nodorum (strain SN15 / ATCC MYA-4574 / FGSC 10173) (Glume blotch fungus).